The chain runs to 447 residues: MPAPALPTSAMAVQVPLWHHYLQAIRSREAPRAQDFQRAENVLLTVLERVHALDPRFIVDYSRGLEAFQFALRSSEDPMDMEVPLWVDAEALLIEEPEATQPEDGLELCHLGVPREGAGLERWTTEDTFTASSEGDAKCRGHIVPSKVLCVLKDLLVAAIVHCKHHSLIAPGSLNAASLREEQLHLSLLVSSGWRTISFHVVPVVRRKLGAPALEGVQQMPGFPEGSLRRILSQGVDLVPASAQLWRTSTDYLLTRLLGELGSLQGHRLDSLSILDRVNHESWRDSGQTDGLTFGHLKMVLLWASVLFLAPEDWAELQGAVYRLLVVLLCCLATRKLPHFLHPQRNLLQGSGLDLGAIYQRVEGFASQPEAALRIHATHLGRSPPPRIGSGLKALLQLPASDPTYWATAYFDVLLDKFQVFNIQDKDRISAMQSIFQKTRTLGGEES.

The polypeptide is Protein mab-21-like 4 (Homo sapiens (Human)).